The sequence spans 335 residues: Glycerol-3-phosphate dehydrogenase [NAD(P)+] (335 aa).

The NADPH site is built by Ser-10, Phe-11, Arg-31, and Lys-105. 3 residues coordinate sn-glycerol 3-phosphate: Lys-105, Gly-136, and Ser-138. Ala-140 contacts NADPH. Sn-glycerol 3-phosphate contacts are provided by Lys-191, Asp-244, Ser-254, Arg-255, and Asn-256. Catalysis depends on Lys-191, which acts as the Proton acceptor. Residue Arg-255 coordinates NADPH. Val-279 and Glu-281 together coordinate NADPH.

The protein belongs to the NAD-dependent glycerol-3-phosphate dehydrogenase family.

It localises to the cytoplasm. The catalysed reaction is sn-glycerol 3-phosphate + NAD(+) = dihydroxyacetone phosphate + NADH + H(+). The enzyme catalyses sn-glycerol 3-phosphate + NADP(+) = dihydroxyacetone phosphate + NADPH + H(+). Its pathway is membrane lipid metabolism; glycerophospholipid metabolism. Catalyzes the reduction of the glycolytic intermediate dihydroxyacetone phosphate (DHAP) to sn-glycerol 3-phosphate (G3P), the key precursor for phospholipid synthesis. The protein is Glycerol-3-phosphate dehydrogenase [NAD(P)+] of Leptospira borgpetersenii serovar Hardjo-bovis (strain JB197).